We begin with the raw amino-acid sequence, 440 residues long: Xaa-Pro dipeptidase (440 aa).

Mn(2+)-binding residues include Asp-244, Asp-255, His-335, Glu-380, and Glu-419.

Belongs to the peptidase M24B family. Bacterial-type prolidase subfamily. Requires Mn(2+) as cofactor.

The catalysed reaction is Xaa-L-Pro dipeptide + H2O = an L-alpha-amino acid + L-proline. In terms of biological role, splits dipeptides with a prolyl residue in the C-terminal position. This Shewanella halifaxensis (strain HAW-EB4) protein is Xaa-Pro dipeptidase.